The following is a 433-amino-acid chain: UPF0761 membrane protein Sde_0901 (433 aa).

Helical transmembrane passes span 46–66 (LFAM…FPAF), 103–123 (LSAA…TNIE), 142–162 (FLLY…GLAM), 185–205 (FFSY…FAAV), 217–237 (IGGI…GWVV), and 247–267 (GAFA…MIIL).

The protein belongs to the UPF0761 family.

The protein localises to the cell inner membrane. The chain is UPF0761 membrane protein Sde_0901 from Saccharophagus degradans (strain 2-40 / ATCC 43961 / DSM 17024).